Consider the following 190-residue polypeptide: Potassium-transporting ATPase KdpC subunit (190 aa).

A helical membrane pass occupies residues 10 to 30 (TFLFLLLITGGVYPLLTTALG).

Belongs to the KdpC family. In terms of assembly, the system is composed of three essential subunits: KdpA, KdpB and KdpC.

It is found in the cell inner membrane. Its function is as follows. Part of the high-affinity ATP-driven potassium transport (or Kdp) system, which catalyzes the hydrolysis of ATP coupled with the electrogenic transport of potassium into the cytoplasm. This subunit acts as a catalytic chaperone that increases the ATP-binding affinity of the ATP-hydrolyzing subunit KdpB by the formation of a transient KdpB/KdpC/ATP ternary complex. The sequence is that of Potassium-transporting ATPase KdpC subunit from Escherichia coli O6:H1 (strain CFT073 / ATCC 700928 / UPEC).